A 129-amino-acid polypeptide reads, in one-letter code: Small ribosomal subunit protein bS6 (129 aa).

Positions 110–121 (FVRRDDERREDT) are enriched in basic and acidic residues. Residues 110-129 (FVRRDDERREDTVEAASSEE) are disordered.

Belongs to the bacterial ribosomal protein bS6 family.

In terms of biological role, binds together with bS18 to 16S ribosomal RNA. The protein is Small ribosomal subunit protein bS6 of Aeromonas salmonicida (strain A449).